The sequence spans 402 residues: Dynactin subunit 2 (402 aa).

Positions 1–26 (MADPKYADLPGIARNEPDVYETSDLP) are disordered. Coiled-coil stretches lie at residues 101 to 132 (PQQR…SAAE) and 357 to 402 (VHLD…KRLQ).

It belongs to the dynactin subunit 2 family. Subunit of dynactin, a multiprotein complex part of a tripartite complex with dynein and a adapter, such as BICDL1, BICD2 or HOOK3. The dynactin complex is built around ACTR1A/ACTB filament and consists of an actin-related filament composed of a shoulder domain, a pointed end and a barbed end. Its length is defined by its flexible shoulder domain. The soulder is composed of 2 DCTN1 subunits, 4 DCTN2 and 2 DCTN3.

Its subcellular location is the cytoplasm. The protein localises to the cytoskeleton. It localises to the microtubule organizing center. It is found in the centrosome. The protein resides in the membrane. Functionally, part of the dynactin complex that activates the molecular motor dynein for ultra-processive transport along microtubules. In the dynactin soulder domain, binds the ACTR1A filament and acts as a molecular ruler to determine the length. Modulates cytoplasmic dynein binding to an organelle, and plays a role in prometaphase chromosome alignment and spindle organization during mitosis. Involved in anchoring microtubules to centrosomes. The protein is Dynactin subunit 2 (DCTN2) of Gallus gallus (Chicken).